Consider the following 548-residue polypeptide: Probable nuclear hormone receptor HR3 (548 aa).

The disordered stretch occupies residues 1 to 27 (MNNNQFHELFGSQWPPDQHGGHSSAST). A DNA-binding region (nuclear receptor) is located at residues 101-176 (IIPCKVCGDK…LGMSRDAVKF (76 aa)). 2 NR C4-type zinc fingers span residues 104-124 (CKVC…CEGC) and 140-164 (CPRN…LQKC). The interval 198–228 (MRAQNDAAPDSVYDAQQQTPSSSDQFHGHYN) is disordered. Residues 211 to 222 (DAQQQTPSSSDQ) are compositionally biased toward polar residues. An NR LBD domain is found at 295–539 (ISKVLVKSLA…PALYKELFSL (245 aa)).

This sequence belongs to the nuclear hormone receptor family. NR1 subfamily.

The protein localises to the nucleus. Functionally, putative receptor whose ligand is not yet known. The protein is Probable nuclear hormone receptor HR3 (HR3) of Manduca sexta (Tobacco hawkmoth).